The chain runs to 79 residues: uncharacterized protein (79 aa).

Positions 1 to 19 (MKYVALAFVLSLVILQISA) are cleaved as a signal peptide.

As to expression, nacreous layer of shell (at protein level). Expressed primarily in the mantle with highest level in the mantle pallium and lower level in the mantle edge.

It localises to the secreted. This is an uncharacterized protein from Pinctada maxima (Silver-lipped pearl oyster).